Consider the following 392-residue polypeptide: Na(+)/H(+) antiporter NhaA 2 (392 aa).

A run of 11 helical transmembrane segments spans residues 20–40, 61–81, 99–119, 127–147, 158–178, 181–201, 209–229, 265–285, 298–318, 336–356, and 365–385; these read FFAAESAGGLVLMAAALAALI, LSVSHWINDGLMAIFFMLVGL, ALPGFAALGGMLVPALIYVAF, IGGWAIPAATDIAFALGVLSL, IFLSALAILDDLGAVLIIALF, SDLSIPMLLAALGSIAMLVAL, LLPYLIVGALLWFFMLQSGIH, VAFAVVPIFGFANAGVSLSGI, VALGLLVGKQVGIFAMAALAI, GVAALCGIGFTMSLFIGALAF, and EVKVGVLIGSVLSAVLGVVVL.

It belongs to the NhaA Na(+)/H(+) (TC 2.A.33) antiporter family.

The protein localises to the cell inner membrane. The enzyme catalyses Na(+)(in) + 2 H(+)(out) = Na(+)(out) + 2 H(+)(in). Its function is as follows. Na(+)/H(+) antiporter that extrudes sodium in exchange for external protons. The polypeptide is Na(+)/H(+) antiporter NhaA 2 (Pseudomonas syringae pv. syringae (strain B728a)).